Here is a 383-residue protein sequence, read N- to C-terminus: U-box domain-containing protein 63 (383 aa).

Residues 166–186 are disordered; the sequence is PDGNVSNSHRNTQQKRDFASV. The U-box domain maps to 201–273; the sequence is SLKAILSDPV…HAFRQEEDSD (73 aa).

It catalyses the reaction S-ubiquitinyl-[E2 ubiquitin-conjugating enzyme]-L-cysteine + [acceptor protein]-L-lysine = [E2 ubiquitin-conjugating enzyme]-L-cysteine + N(6)-ubiquitinyl-[acceptor protein]-L-lysine.. It participates in protein modification; protein ubiquitination. Functionally, functions as an E3 ubiquitin ligase. The sequence is that of U-box domain-containing protein 63 (PUB63) from Arabidopsis thaliana (Mouse-ear cress).